The chain runs to 348 residues: Protein RecA (348 aa).

66–73 (GPESSGKT) contacts ATP.

It belongs to the RecA family.

It localises to the cytoplasm. Its function is as follows. Can catalyze the hydrolysis of ATP in the presence of single-stranded DNA, the ATP-dependent uptake of single-stranded DNA by duplex DNA, and the ATP-dependent hybridization of homologous single-stranded DNAs. It interacts with LexA causing its activation and leading to its autocatalytic cleavage. The polypeptide is Protein RecA (Neisseria gonorrhoeae (strain NCCP11945)).